We begin with the raw amino-acid sequence, 450 residues long: Tubulin beta-6 chain (450 aa).

Residues Q11, E71, S140, G144, T145, G146, N206, and N228 each contribute to the GTP site. E71 contributes to the Mg(2+) binding site. A disordered region spans residues 429 to 450; the sequence is DATVEDEEEYEGEEGLDENYET. Residues 431-450 show a composition bias toward acidic residues; that stretch reads TVEDEEEYEGEEGLDENYET.

This sequence belongs to the tubulin family. In terms of assembly, dimer of alpha and beta chains. A typical microtubule is a hollow water-filled tube with an outer diameter of 25 nm and an inner diameter of 15 nM. Alpha-beta heterodimers associate head-to-tail to form protofilaments running lengthwise along the microtubule wall with the beta-tubulin subunit facing the microtubule plus end conferring a structural polarity. Microtubules usually have 13 protofilaments but different protofilament numbers can be found in some organisms and specialized cells. Mg(2+) is required as a cofactor.

The protein resides in the cytoplasm. It localises to the cytoskeleton. In terms of biological role, tubulin is the major constituent of microtubules, a cylinder consisting of laterally associated linear protofilaments composed of alpha- and beta-tubulin heterodimers. Microtubules grow by the addition of GTP-tubulin dimers to the microtubule end, where a stabilizing cap forms. Below the cap, tubulin dimers are in GDP-bound state, owing to GTPase activity of alpha-tubulin. The chain is Tubulin beta-6 chain from Gossypium hirsutum (Upland cotton).